The chain runs to 1548 residues: MLRARPEALMLLGALLTGSLGPSGNQDALSLPWEVQRYDGWFNNLRHHERGAVGCRLQRRVPANYADGVYQALEEPQLPNPRRLSNAATRGIAGLPSLHNRTVLGVFFGYHVLSDVVSVETPGCPAEFLNIRIPPGDPVFDPDQRGDVVLPFQRSRWDPETGRSPSNPRDLANQVTGWLDGSAIYGSSHSWSDALRSFSGGQLASGPDPAFPRDSQNPLLMWAAPDPATGQNGPRGLYAFGAERGNREPFLQALGLLWFRYHNLWAQRLARQHPDWEDEELFQHARKRVIATYQNIAVYEWLPSFLQKTLPEYTGYRPFLDPSISPEFVVASEQFFSTMVPPGVYMRNASCHFRKVLNKGFQSSQALRVCNNYWIRENPNLNSTQEVNELLLGMASQISELEDNIVVEDLRDYWPGPGKFSRTDYVASSIQRGRDMGLPSYSQALLAFGLDIPRNWSDLNPNVDPQVLEATAALYNQDLSQLELLLGGLLESHGDPGPLFSAIVLDQFVRLRDGDRYWFENTRNGLFSKKEIEDIRNTTLRDVLVAVINIDPSALQPNVFVWHKGAPCPQPKQLTTDGLPQCAPLTVLDFFEGSSPGFAITIIALCCLPLVSLLLSGVVAYFRGREHKKLQKKLKESVKKEAAKDGVPAMEWPGPKERSSPIIIQLLSDRCLQVLNRHLTVLRVVQLQPLQQVNLILSNNRGCRTLLLKIPKEYDLVLLFSSEEERGAFVQQLWDFCVRWALGLHVAEMSEKELFRKAVTKQQRERILEIFFRHLFAQVLDINQADAGTLPLDSSQKVREALTCELSRAEFAESLGLKPQDMFVESMFSLADKDGNGYLSFREFLDILVVFMKGSPEDKSRLMFTMYDLDENGFLSKDEFFTMMRSFIEISNNCLSKAQLAEVVESMFRESGFQDKEELTWEDFHFMLRDHDSELRFTQLCVKGGGGGGNGIRDIFKQNISCRVSFITRTPGERSHPQGLGPPAPEAPELGGPGLKKRFGKKAAVPTPRLYTEALQEKMQRGFLAQKLQQYKRFVENYRRHIVCVAIFSAICVGVFADRAYYYGFASPPSDIAQTTLVGIILSRGTAASVSFMFSYILLTMCRNLITFLRETFLNRYVPFDAAVDFHRWIAMAAVVLAILHSAGHAVNVYIFSVSPLSLLACIFPNVFVNDGSKLPQKFYWWFFQTVPGMTGVLLLLVLAIMYVFASHHFRRRSFRGFWLTHHLYILLYALLIIHGSYALIQLPTFHIYFLVPAIIYGGDKLVSLSRKKVEISVVKAELLPSGVTYLQFQRPQGFEYKSGQWVRIACLALGTTEYHPFTLTSAPHEDTLSLHIRAVGPWTTRLREIYSSPKGNGCAGYPKLYLDGPFGEGHQEWHKFEVSVLVGGGIGVTPFASILKDLVFKSSLGSQMLCKKIYFIWVTRTQRQFEWLADIIQEVEENDHQDLVSVHIYVTQLAEKFDLRTTMLYICERHFQKVLNRSLFTGLRSITHFGRPPFEPFFNSLQEVHPQVRKIGVFSCGPPGMTKNVEKACQLVNRQDRAHFMHHYENF.

A signal peptide spans 1–25 (MLRARPEALMLLGALLTGSLGPSGN). Over 26-601 (QDALSLPWEV…EGSSPGFAIT (576 aa)) the chain is Extracellular. The peroxidase-like; mediates peroxidase activity stretch occupies residues 30 to 596 (SLPWEVQRYD…VLDFFEGSSP (567 aa)). 5 N-linked (GlcNAc...) asparagine glycosylation sites follow: N100, N348, N382, N455, and N537. The cysteines at positions 124 and 1162 are disulfide-linked. A helical transmembrane segment spans residues 602 to 622 (IIALCCLPLVSLLLSGVVAYF). Over 623 to 1041 (RGREHKKLQK…KRFVENYRRH (419 aa)) the chain is Cytoplasmic. 3 EF-hand domains span residues 819 to 854 (PQDM…FMKG), 855 to 890 (SPED…FIEI), and 899 to 934 (QLAE…HDSE). Ca(2+) is bound by residues D832, D834, N836, Y838, E843, D868, D870, N872, and E879. The interaction with TXNDC11 stretch occupies residues 960–1245 (ISCRVSFITR…GSYALIQLPT (286 aa)). The tract at residues 971–991 (PGERSHPQGLGPPAPEAPELG) is disordered. A helical membrane pass occupies residues 1042–1062 (IVCVAIFSAICVGVFADRAYY). Residues 1063-1076 (YGFASPPSDIAQTT) lie on the Extracellular side of the membrane. Residues 1077–1097 (LVGIILSRGTAASVSFMFSYI) traverse the membrane as a helical segment. Residues 1084 to 1266 (RGTAASVSFM…YGGDKLVSLS (183 aa)) enclose the Ferric oxidoreductase domain. Topologically, residues 1098–1128 (LLTMCRNLITFLRETFLNRYVPFDAAVDFHR) are cytoplasmic. The chain crosses the membrane as a helical span at residues 1129 to 1151 (WIAMAAVVLAILHSAGHAVNVYI). The Extracellular segment spans residues 1152–1185 (FSVSPLSLLACIFPNVFVNDGSKLPQKFYWWFFQ). Residues 1186–1206 (TVPGMTGVLLLLVLAIMYVFA) traverse the membrane as a helical segment. Topologically, residues 1207–1223 (SHHFRRRSFRGFWLTHH) are cytoplasmic. 2 helical membrane-spanning segments follow: residues 1224–1244 (LYIL…IQLP) and 1245–1265 (TFHI…LVSL). Over 1266–1548 (SRKKVEISVV…AHFMHHYENF (283 aa)) the chain is Cytoplasmic. In terms of domain architecture, FAD-binding FR-type spans 1267–1373 (RKKVEISVVK…DGPFGEGHQE (107 aa)).

The protein in the N-terminal section; belongs to the peroxidase family. In terms of assembly, heterodimer with DUOXA2; disulfide-linked. Interacts with TXNDC11, TPO and CYBA. N-glycosylated. Expressed in colon, small intestine, duodenum and tracheal surface epithelial cells (at protein level). Expressed in thyrocytes. Also detected in kidney, liver, lung, pancreas, prostate, salivary glands, rectum and testis.

The protein resides in the apical cell membrane. Its subcellular location is the cell junction. The enzyme catalyses NADH + O2 + H(+) = H2O2 + NAD(+). It catalyses the reaction NADPH + O2 + H(+) = H2O2 + NADP(+). The protein operates within hormone biosynthesis; thyroid hormone biosynthesis. With respect to regulation, peroxidase activity is inhibited by aminobenzohydrazide. The NADPH oxidase activity is calcium-dependent. Generates hydrogen peroxide which is required for the activity of thyroid peroxidase/TPO and lactoperoxidase/LPO. Plays a role in thyroid hormones synthesis and lactoperoxidase-mediated antimicrobial defense at the surface of mucosa. May have its own peroxidase activity through its N-terminal peroxidase-like domain. This chain is Dual oxidase 2 (DUOX2), found in Homo sapiens (Human).